Here is a 292-residue protein sequence, read N- to C-terminus: Endolysin A (292 aa).

This sequence belongs to the L5likevirus endolysin A protein family.

Endolysin that degrades host peptidoglycans and participates with the holin protein in the sequential events which lead to the programmed host cell lysis releasing the mature viral particles. Once the holin has permeabilized the host cell membrane, the endolysin can reach the periplasm and break down the peptidoglycan layer. In Mycobacterium phage L5 (Mycobacteriophage L5), this protein is Endolysin A (10).